Reading from the N-terminus, the 223-residue chain is Phosphoribosylformylglycinamidine synthase subunit PurQ (223 aa).

Residues 3–223 (FAVLVFPGSN…MVKSWREQHV (221 aa)) form the Glutamine amidotransferase type-1 domain. Cysteine 85 (nucleophile) is an active-site residue. Residues histidine 193 and glutamate 195 contribute to the active site.

As to quaternary structure, part of the FGAM synthase complex composed of 1 PurL, 1 PurQ and 2 PurS subunits.

Its subcellular location is the cytoplasm. It catalyses the reaction N(2)-formyl-N(1)-(5-phospho-beta-D-ribosyl)glycinamide + L-glutamine + ATP + H2O = 2-formamido-N(1)-(5-O-phospho-beta-D-ribosyl)acetamidine + L-glutamate + ADP + phosphate + H(+). It carries out the reaction L-glutamine + H2O = L-glutamate + NH4(+). It participates in purine metabolism; IMP biosynthesis via de novo pathway; 5-amino-1-(5-phospho-D-ribosyl)imidazole from N(2)-formyl-N(1)-(5-phospho-D-ribosyl)glycinamide: step 1/2. Part of the phosphoribosylformylglycinamidine synthase complex involved in the purines biosynthetic pathway. Catalyzes the ATP-dependent conversion of formylglycinamide ribonucleotide (FGAR) and glutamine to yield formylglycinamidine ribonucleotide (FGAM) and glutamate. The FGAM synthase complex is composed of three subunits. PurQ produces an ammonia molecule by converting glutamine to glutamate. PurL transfers the ammonia molecule to FGAR to form FGAM in an ATP-dependent manner. PurS interacts with PurQ and PurL and is thought to assist in the transfer of the ammonia molecule from PurQ to PurL. This chain is Phosphoribosylformylglycinamidine synthase subunit PurQ, found in Staphylococcus aureus (strain bovine RF122 / ET3-1).